The chain runs to 302 residues: uncharacterized protein (302 aa).

Residues 1–60 (MRMNMSDFATFFAVARNQSFRAAGDELGLSSSAISHSIKTLEQRLKIRLFNRTTRSVSLT) enclose the HTH lysR-type domain. A DNA-binding region (H-T-H motif) is located at residues 20-40 (FRAAGDELGLSSSAISHSIKT).

This sequence belongs to the LysR transcriptional regulatory family.

This is an uncharacterized protein from Escherichia coli (strain K12).